A 97-amino-acid polypeptide reads, in one-letter code: MKIRPLHDRVIVKRKEIEAKSAGGIVLTGSAAGKSTRGEVLAVGRGRILENGEVKALDVKVGDIVIFNDGYGVKVEKIDNDEVLIMSESDILAIVEK.

The protein belongs to the GroES chaperonin family. Heptamer of 7 subunits arranged in a ring. Interacts with the chaperonin GroEL.

Its subcellular location is the cytoplasm. In terms of biological role, together with the chaperonin GroEL, plays an essential role in assisting protein folding. The GroEL-GroES system forms a nano-cage that allows encapsulation of the non-native substrate proteins and provides a physical environment optimized to promote and accelerate protein folding. GroES binds to the apical surface of the GroEL ring, thereby capping the opening of the GroEL channel. The chain is Co-chaperonin GroES from Sodalis glossinidius (strain morsitans).